Consider the following 341-residue polypeptide: NADH-quinone oxidoreductase subunit H 1 (341 aa).

A run of 8 helical transmembrane segments spans residues 13–33 (LVVIGQSLLLLILLLITIAYI), 82–102 (GVFLLAPLVSCVLALAAWAVI), 115–135 (VGVLYILAVSSLSVYGIIMAG), 161–181 (IGFVIIAVLLCVGSLNLTAIV), 190–210 (LLGWYWLPLFPVFVIFYVSAL), 248–268 (YVAITTMCAMGAILFLGGWLP), 277–297 (WVPGIIWFMLKGFFMFFLFAM), and 317–337 (VFLPLSLVMVVIVAGVLQFAG).

This sequence belongs to the complex I subunit 1 family. In terms of assembly, NDH-1 is composed of 14 different subunits. Subunits NuoA, H, J, K, L, M, N constitute the membrane sector of the complex.

It is found in the cell inner membrane. It catalyses the reaction a quinone + NADH + 5 H(+)(in) = a quinol + NAD(+) + 4 H(+)(out). Functionally, NDH-1 shuttles electrons from NADH, via FMN and iron-sulfur (Fe-S) centers, to quinones in the respiratory chain. The immediate electron acceptor for the enzyme in this species is believed to be ubiquinone. Couples the redox reaction to proton translocation (for every two electrons transferred, four hydrogen ions are translocated across the cytoplasmic membrane), and thus conserves the redox energy in a proton gradient. This subunit may bind ubiquinone. In Rhodopseudomonas palustris (strain BisB18), this protein is NADH-quinone oxidoreductase subunit H 1.